Consider the following 229-residue polypeptide: Heptaprenylglyceryl phosphate synthase (229 aa).

Sn-glycerol 1-phosphate is bound at residue Lys12. Residues Asp14 and Ser40 each contribute to the Mg(2+) site. Sn-glycerol 1-phosphate contacts are provided by residues 159–164 (YLEYSG), Gly189, and 209–210 (GN).

The protein belongs to the GGGP/HepGP synthase family. Group I subfamily. As to quaternary structure, homodimer. The cofactor is Mg(2+).

The catalysed reaction is sn-glycerol 1-phosphate + all-trans-heptaprenyl diphosphate = 3-heptaprenyl-sn-glycero-1-phosphate + diphosphate. Its pathway is membrane lipid metabolism; glycerophospholipid metabolism. Its function is as follows. Prenyltransferase that catalyzes in vivo the transfer of the heptaprenyl moiety of heptaprenyl pyrophosphate (HepPP; 35 carbon atoms) to the C3 hydroxyl of sn-glycerol-1-phosphate (G1P), producing heptaprenylglyceryl phosphate (HepGP). This reaction is an ether-bond-formation step in the biosynthesis of archaea-type G1P-based membrane lipids found in Bacillales. In Bacillus mycoides (strain KBAB4) (Bacillus weihenstephanensis), this protein is Heptaprenylglyceryl phosphate synthase.